A 479-amino-acid polypeptide reads, in one-letter code: ATP synthase subunit beta (479 aa).

153-160 (GGAGVGKT) is an ATP binding site.

Belongs to the ATPase alpha/beta chains family. In terms of assembly, F-type ATPases have 2 components, CF(1) - the catalytic core - and CF(0) - the membrane proton channel. CF(1) has five subunits: alpha(3), beta(3), gamma(1), delta(1), epsilon(1). CF(0) has three main subunits: a(1), b(2) and c(9-12). The alpha and beta chains form an alternating ring which encloses part of the gamma chain. CF(1) is attached to CF(0) by a central stalk formed by the gamma and epsilon chains, while a peripheral stalk is formed by the delta and b chains.

It is found in the cell membrane. It carries out the reaction ATP + H2O + 4 H(+)(in) = ADP + phosphate + 5 H(+)(out). Its function is as follows. Produces ATP from ADP in the presence of a proton gradient across the membrane. The catalytic sites are hosted primarily by the beta subunits. This chain is ATP synthase subunit beta, found in Lactobacillus delbrueckii subsp. bulgaricus (strain ATCC 11842 / DSM 20081 / BCRC 10696 / JCM 1002 / NBRC 13953 / NCIMB 11778 / NCTC 12712 / WDCM 00102 / Lb 14).